The primary structure comprises 1946 residues: 1,3-beta-glucan synthase component (1946 aa).

Disordered regions lie at residues 1-127 (MSGY…FSDF) and 152-198 (YGEG…KEPY). Low complexity-rich tracts occupy residues 24 to 34 (GYYQDDQYYDQ), 43 to 60 (GDHAAQGDHGAQGTQGDG), and 91 to 109 (DDYYNNNQGYYDGEYNQGY). Polar residues predominate over residues 165 to 180 (QLSYGGNRSSGASTPN). Residues asparagine 171 and asparagine 290 are each glycosylated (N-linked (GlcNAc...) asparagine). The tract at residues 297–316 (KRKAKKGKKKGGEAGNEAET) is disordered. 6 consecutive transmembrane segments (helical) span residues 489-509 (WFHLLLNFNRIWVIHLTMFWF), 537-557 (FSIVGFGGAIASLIQIFATLA), 576-596 (LLFLIVILVLNVAPGVKVFMF), 618-638 (IGIVHFVIAVFTFLFFSVMPL), 675-695 (FGLWLTVFGAKFGESYVYLTL), and 734-754 (IVLILMTFTDLIFFFLDTYLF). N-linked (GlcNAc...) asparagine glycosylation is found at asparagine 1017 and asparagine 1312. 5 helical membrane-spanning segments follow: residues 1356 to 1376 (NMFIMLSVQSFMLTLMSIGAL), 1413 to 1433 (CIISIFFVFFISFVPLIVQEL), 1500 to 1520 (FAGQSIYFGARLLMMLLFATS), 1523 to 1543 (WQPALTYFWIVLLGLIISPFL), and 1615 to 1635 (IFLTEILTPLLLAATTTVAYL). A glycan (N-linked (GlcNAc...) asparagine) is linked at asparagine 1649. 5 helical membrane passes run 1667-1687 (LAVVAFAPIGINAGVLAAMFG), 1703-1723 (FGPVLAGIAHGAAAVFMIIFF), 1738-1758 (LAGIIAAMCIQRFIFKLIVSL), 1803-1823 (FSADFILGHWILFMMAPLILI), and 1864-1884 (AILYFVLFIIFLALVVAPGVI). Asparagine 1918 carries N-linked (GlcNAc...) asparagine glycosylation. The segment at 1920–1946 (TEGKTETGTKAGGADASATDASKLRLF) is disordered. Low complexity predominate over residues 1925–1940 (ETGTKAGGADASATDA).

The protein belongs to the glycosyltransferase 48 family. Component of the 1,3-beta-glucan synthase (GS) complex composed of a catalytic subunit GLS1 and a regulatory subunit RHO1.

It localises to the membrane. The protein resides in the cell membrane. The catalysed reaction is [(1-&gt;3)-beta-D-glucosyl](n) + UDP-alpha-D-glucose = [(1-&gt;3)-beta-D-glucosyl](n+1) + UDP + H(+). With respect to regulation, activated by iron ions. Inhibited by manganese, copper and zinc ions. Its function is as follows. Catalytic subunit of the 1,3-beta-glucan synthase (GS). Synthesizes 1,3-beta-glucan, a major structural component of the fungal cell wall. Involved in cell wall synthesis, maintenance and remodeling. The chain is 1,3-beta-glucan synthase component from Cordyceps militaris (strain CM01) (Caterpillar fungus).